A 340-amino-acid polypeptide reads, in one-letter code: 4-hydroxy-2-oxovalerate aldolase (340 aa).

One can recognise a Pyruvate carboxyltransferase domain in the interval 5 to 255; it reads IVITEVALRD…QTGVDLYKMM (251 aa). 13 to 14 lines the substrate pocket; sequence RD. Asp14 provides a ligand contact to Mn(2+). The active-site Proton acceptor is the His17. Residues Ser167 and His194 each coordinate substrate. 2 residues coordinate Mn(2+): His194 and His196. Residue Tyr285 coordinates substrate.

The protein belongs to the 4-hydroxy-2-oxovalerate aldolase family.

The enzyme catalyses (S)-4-hydroxy-2-oxopentanoate = acetaldehyde + pyruvate. This is 4-hydroxy-2-oxovalerate aldolase from Brevibacillus brevis (strain 47 / JCM 6285 / NBRC 100599).